We begin with the raw amino-acid sequence, 111 residues long: MFGKAGLGGLMKQAQQMQENMKKAQAKLAETEIEGEAGNGLVKITMTCAHEVRKIDISPDLIQEAADDKEMLEDLILAALKSARDKAEETANKTMGAFTQGLPPGVGDFFR.

It belongs to the YbaB/EbfC family. In terms of assembly, homodimer.

It localises to the cytoplasm. Its subcellular location is the nucleoid. Functionally, binds to DNA and alters its conformation. May be involved in regulation of gene expression, nucleoid organization and DNA protection. The polypeptide is Nucleoid-associated protein NMA1657 (Neisseria meningitidis serogroup A / serotype 4A (strain DSM 15465 / Z2491)).